Here is a 1154-residue protein sequence, read N- to C-terminus: MDVMNVPVDSERDNPGDKVETQSDKNHLPKASPSQSQSPVNTSLHNGDGKDNGVATEPVENKQILSERSVTRDDYEKGKTIVSSLALSSISGKDGSISSQNAEGLSSSSNRPLDVNDALSYLELVKYYFSERREIYNRFLEIMRDFKSQALDTLGVINRVSELFNGYPQLIEGFNTFLPSGYKIEVQLDSSNTSVVRVGTPMHPLPQQGVQSTLPVAPSNEDQRTMESTSPTDSQPQPSAPNLVSSTENEKPRVDFNYAIAYMNKVKARYPPNSDTYMEFLGVLRTYQKAQKSIFEVRARVAEIFKDSPDLLEEFKLFLPDNVDSTEPSTPNVQKSPNRLPPVGNFSLPPSAPVREKRNRPAHSAQISRSISKTSRMYRQTAEEPLNSYSLHVYPQKITAPTSPYAATQEELLAFTTIRQHLPDTLAFHKFLELLHLYREKLLDKTELLNSFSKLVRNDNLTLWFSEFIRWSDNPILVKNEPVDERVYLPETFECISLTYRKLPDSWKQDKCSGRDDLDNSVLNDDYISVAPKPSHVKNIMHHENQYLQALQLVEDERYDYDRVLNTTESAIKILANFCEPTIHEHLETALQELERSKRIIKNALIIVYGKEHANLALDTLFKKLPTAAPVLLKRIKTKDQEWRRSKREWSKIWRQIEKKNAQAAFDDRYCRIEGRDRRGLSYSRILRDIDDIYQRQKHRIDGAKLGFQFTQVLCDSLIFLNILRLSDAQLTNSSFYSYADKGRISAVLKALLSQFFGIPLPREALETNLASENIESVKKHRDGLSKIFIRPESADNSNNTNVSFQTDETQTEDETMSDIHPDDVENHSKSKFLGEESKNIIGYNFFGNATMYVLFRLICVCYSRLEHIKLFVESSTIYASSTGGYENILNICEKYLKGSCSRLEFRKYLQKFNNETCYMICSIERLLKVIFYRIHEILLDPKLGQLLLLFESDGANSVTTPREQMVYRNHVESILAPESKIFNMRWYPLEKRLCIQQLLPADLTMHDFENPAKAFMYYVDSYAISHITEGVDLMQVKMPFLRRSLQRISQQGYLAGRGSGRLHSLFNEHFCKSNLQLFFSTDTYVIFFEPNTENVYINSYNLWVDQSSQSKKQNRTTNWRRWLESDEGWRKSKANTDIKFFSETTLDQCIEAM.

2 disordered regions span residues M1–T71 and S91–N110. Basic and acidic residues predominate over residues D9–H27. 2 stretches are compositionally biased toward polar residues: residues S32–H45 and Q100–N110. Residues R111–G181 enclose the PAH 1 domain. Disordered stretches follow at residues G199–N249 and D321–R376. Low complexity predominate over residues S228 to P241. A PAH 2 domain is found at P252–N322. Composition is skewed to polar residues over residues V323–P337 and A365–R376. A PAH 3 domain is found at S403–S472. The segment at N797 to D824 is disordered.

The protein localises to the nucleus. This Schizosaccharomyces pombe (strain 972 / ATCC 24843) (Fission yeast) protein is Paired amphipathic helix protein pst3 (pst3).